Reading from the N-terminus, the 329-residue chain is Taste receptor type 2 member 102 (329 aa).

At 1–9 (MNMESVLHN) the chain is on the extracellular side. A helical membrane pass occupies residues 10-30 (FATVLIYVEFIFGNLSNGFIV). Over 31–47 (LSNFLDWVIKQKLSLID) the chain is Cytoplasmic. A helical membrane pass occupies residues 48-68 (KILLTLAISRITLIWEIYAWF). The Extracellular segment spans residues 69–85 (KSLYDPSSFLIGIEFQI). The chain crosses the membrane as a helical span at residues 86–108 (IYFSWVLSSHFSLWLATTLSVFY). At 109–129 (LLRIANCSWQIFLYLKWRLKQ) the chain is on the cytoplasmic side. Residues 130 to 150 (LIVGMLLGSLVFLLGNLMQSM) traverse the membrane as a helical segment. The Extracellular portion of the chain corresponds to 151–181 (LEERFYQYGRNTSVNTMSNDLAMWTELIFFN). A glycan (N-linked (GlcNAc...) asparagine) is linked at N161. The helical transmembrane segment at 182-202 (MAMFSVIPFTLALISFLLLIF) threads the bilayer. Residues 203–231 (SLWKHLQKMQLISRRHRDPSTKAHMNALR) are Cytoplasmic-facing. Residues 232-252 (IMVSFLLLYTMHFLSLLISWI) traverse the membrane as a helical segment. Residues 253 to 262 (AQKHQSELAD) lie on the Extracellular side of the membrane. A helical transmembrane segment spans residues 263–283 (IIGMITELMYPSVHSCILILG). At 284–329 (NSKLKQTSLCMLRHLRCRLKGENITIAYSNQITSFCVFCVANKSMR) the chain is on the cytoplasmic side.

It belongs to the G-protein coupled receptor T2R family.

It is found in the membrane. In terms of biological role, putative taste receptor which may play a role in the perception of bitterness. The sequence is that of Taste receptor type 2 member 102 from Mus musculus (Mouse).